A 322-amino-acid chain; its full sequence is Putative heme-binding peroxidase (322 aa).

Catalysis depends on histidine 38, which acts as the Proton acceptor. A heme b-binding site is contributed by histidine 162. The active-site Tryptophan radical intermediate is the tryptophan 178. Positions 288–322 (ISAPKKSNHPTGPAKGAQGGCPVAASQGGCPRAKL) are disordered.

Belongs to the peroxidase family. Cytochrome c peroxidase subfamily. The cofactor is heme b.

Functionally, destroys radicals which are normally produced within the cells and which are toxic to biological systems. This Aspergillus fumigatus (strain ATCC MYA-4609 / CBS 101355 / FGSC A1100 / Af293) (Neosartorya fumigata) protein is Putative heme-binding peroxidase.